Consider the following 308-residue polypeptide: Acetyl-coenzyme A carboxylase carboxyl transferase subunit beta (308 aa).

In terms of domain architecture, CoA carboxyltransferase N-terminal spans 25–294 (VWTKCTSCEQ…PLVVSVNDAP (270 aa)). Residues cysteine 29, cysteine 32, cysteine 48, and cysteine 51 each contribute to the Zn(2+) site. A C4-type zinc finger spans residues 29 to 51 (CTSCEQVLYYAELERNLEVCPKC).

It belongs to the AccD/PCCB family. In terms of assembly, acetyl-CoA carboxylase is a heterohexamer composed of biotin carboxyl carrier protein (AccB), biotin carboxylase (AccC) and two subunits each of ACCase subunit alpha (AccA) and ACCase subunit beta (AccD). Requires Zn(2+) as cofactor.

The protein localises to the cytoplasm. The enzyme catalyses N(6)-carboxybiotinyl-L-lysyl-[protein] + acetyl-CoA = N(6)-biotinyl-L-lysyl-[protein] + malonyl-CoA. It participates in lipid metabolism; malonyl-CoA biosynthesis; malonyl-CoA from acetyl-CoA: step 1/1. Functionally, component of the acetyl coenzyme A carboxylase (ACC) complex. Biotin carboxylase (BC) catalyzes the carboxylation of biotin on its carrier protein (BCCP) and then the CO(2) group is transferred by the transcarboxylase to acetyl-CoA to form malonyl-CoA. In Vibrio cholerae serotype O1 (strain ATCC 39315 / El Tor Inaba N16961), this protein is Acetyl-coenzyme A carboxylase carboxyl transferase subunit beta.